A 76-amino-acid polypeptide reads, in one-letter code: NPCSCSQSHCCSRYLCMGAMSLFLPCLLCYPPAKGCLKLCRGCYDRVNRPGCRCKNSNTVYCKLESCPSRGQGKPS.

Positions 1-52 (NPCSCSQSHCCSRYLCMGAMSLFLPCLLCYPPAKGCLKLCRGCYDRVNRPGC) constitute an SPR domain.

Belongs to the sprouty family. In terms of tissue distribution, brain and interlimb region.

Its subcellular location is the cytoplasm. It is found in the membrane. Inhibits fibroblast growth factor (FGF)-induced retinal lens fiber differentiation. Inhibits TGFB-induced epithelial-to-mesenchymal transition in lens epithelial cells. In Gallus gallus (Chicken), this protein is Protein sprouty homolog 1 (SPRY1).